A 246-amino-acid chain; its full sequence is Ribonuclease 3 (246 aa).

One can recognise an RNase III domain in the interval 30 to 152; sequence ISWIEKNLGH…MIGAIFLESG (123 aa). Glu-65 contacts Mg(2+). The active site involves Asp-69. Mg(2+) contacts are provided by Asp-138 and Glu-141. Residue Glu-141 is part of the active site. Residues 177 to 246 enclose the DRBM domain; the sequence is HPKSALQEWA…AQALLDILAQ (70 aa).

The protein belongs to the ribonuclease III family. In terms of assembly, homodimer. Requires Mg(2+) as cofactor.

The protein localises to the cytoplasm. The catalysed reaction is Endonucleolytic cleavage to 5'-phosphomonoester.. Its function is as follows. Digests double-stranded RNA. Involved in the processing of primary rRNA transcript to yield the immediate precursors to the large and small rRNAs (23S and 16S). Processes some mRNAs, and tRNAs when they are encoded in the rRNA operon. Processes pre-crRNA and tracrRNA of type II CRISPR loci if present in the organism. The protein is Ribonuclease 3 of Zymomonas mobilis subsp. mobilis (strain ATCC 31821 / ZM4 / CP4).